Reading from the N-terminus, the 975-residue chain is Protein bicaudal D homolog 1 (975 aa).

Coiled coils occupy residues 1 to 265 (MAAE…HISI) and 319 to 496 (SELN…IANE). Disordered regions lie at residues 383–403 (SSKELKAELDGEKGRDSGEEA), 545–616 (RSGS…LDTS), 800–824 (DHEQSRRSKGKLGKSKIGSPKVSGE), 836–877 (LLHS…ASYL), and 922–975 (DCQQ…PPHP). 2 stretches are compositionally biased toward basic and acidic residues: residues 385-403 (KELKAELDGEKGRDSGEEA) and 581-590 (VAKESTEASK). Over residues 592-602 (PSPTKTPTISP) the composition is skewed to polar residues. A coiled-coil region spans residues 663-803 (IDKDKEALME…LEDLEFDHEQ (141 aa)). Residues 663–803 (IDKDKEALME…LEDLEFDHEQ (141 aa)) are interaction with RAB6A. Over residues 840 to 877 (QGPQTPNIRVSSGTQRKRQFSPSLCDQSRPRTSGASYL) the composition is skewed to polar residues.

This sequence belongs to the BicD family. Interacts with RAB6A. Interacts (via C-terminus) with RAB6B (GTP-bound); the interaction is direct. Interacts with CLIP-115 and KIFC2. In terms of assembly, (Microbial infection) Interacts with human cytomegalovirus/HHV-5 protein UL32. Expressed in the brain, heart and skeletal muscle.

The protein localises to the golgi apparatus. Its function is as follows. Regulates coat complex coatomer protein I (COPI)-independent Golgi-endoplasmic reticulum transport by recruiting the dynein-dynactin motor complex. The chain is Protein bicaudal D homolog 1 (BICD1) from Homo sapiens (Human).